A 511-amino-acid polypeptide reads, in one-letter code: ESX-1 secretion system protein EccD1 (511 aa).

Residue serine 2 is modified to N-acetylserine. Over 2 to 143 (SAPAVAAGPT…PEFDRTALNR (142 aa)) the chain is Cytoplasmic. The helical transmembrane segment at 144 to 164 (FVGAAIPLLTAPVIGMAMRAW) threads the bilayer. At 165 to 170 (WETGRS) the chain is on the periplasmic side. A helical membrane pass occupies residues 171 to 191 (LWWPLAIGILGIAVLVGSFVA). Topologically, residues 192–202 (NRFYQSGHLAE) are cytoplasmic. A helical transmembrane segment spans residues 203 to 223 (CLLVTTYLLIATAAALAVPLP). Residues 224–227 (RGVN) lie on the Periplasmic side of the membrane. Residues 228-248 (SLGAPQVAGAATAVLFLTLMT) traverse the membrane as a helical segment. Residues 249–257 (RGGPRKRHE) are Cytoplasmic-facing. The chain crosses the membrane as a helical span at residues 258-278 (LASFAVITAIAVIAAAAAFGY). Residues 279 to 285 (GYQDWVP) lie on the Periplasmic side of the membrane. A helical membrane pass occupies residues 286 to 306 (AGGIAFGLFIVTNAAKLTVAV). The Cytoplasmic portion of the chain corresponds to 307-367 (ARIALPPIPV…TERSKLAKQL (61 aa)). A run of 2 helical transmembrane segments spans residues 368 to 388 (LIGY…AVVV) and 389 to 409 (RGHF…VCGF). Over 410 to 420 (RSRLYAERWCA) the chain is Cytoplasmic. The helical transmembrane segment at 421 to 441 (WALLAATVAIPTGLTAKLIIW) threads the bilayer. Residues 442–444 (YPH) are Periplasmic-facing. A helical membrane pass occupies residues 445–465 (YAWLLLSVYLTVALVALVVVG). Residues 466-482 (SMAHVRRVSPVVKRTLE) are Cytoplasmic-facing. The helical transmembrane segment at 483-503 (LIDGAMIAAIIPMLLWITGVY) threads the bilayer. At 504–511 (DTVRNIRF) the chain is on the periplasmic side.

The protein belongs to the EccD/Snm4 family. As to quaternary structure, possibly a homodimer. Part of the ESX-1 / type VII secretion system (T7SS), which is composed of cytosolic and membrane components. The ESX-1 membrane complex is composed of EccB1, EccCa1, EccCb1, EccD1 and EccE1.

Its subcellular location is the cell inner membrane. Its function is as follows. Part of the ESX-1 specialized secretion system, which delivers several virulence factors to host cells during infection, including the key virulence factors EsxA (ESAT-6) and EsxB (CFP-10). This is ESX-1 secretion system protein EccD1 from Mycobacterium tuberculosis (strain ATCC 25618 / H37Rv).